A 481-amino-acid polypeptide reads, in one-letter code: MFS transporter eqxG (481 aa).

Low complexity predominate over residues 1–13; the sequence is MATTDPAIAAPDD. A disordered region spans residues 1–58; that stretch reads MATTDPAIAAPDDSQLEAGRENIRANVGDALEKPSSSTGTMVDEPTDPNVVDWDGPHD. N64 carries an N-linked (GlcNAc...) asparagine glycan. Residues 72–92 form a helical membrane-spanning segment; that stretch reads LHLVIVSLFTLAANLAATMFA. A glycan (N-linked (GlcNAc...) asparagine) is linked at N106. A run of 10 helical transmembrane segments spans residues 111–131, 146–166, 169–189, 201–221, 276–296, 315–335, 353–373, 380–400, 403–423, and 439–459; these read AMTV…LAPL, FVYV…MFLV, IICG…VADL, LFTV…TVIF, PIVL…FLLF, GLAY…FSVL, LILM…YGWT, WIVP…VVIP, IYLV…ANLL, and LYVS…CLLF.

The protein belongs to the major facilitator superfamily.

The protein localises to the cell membrane. Functionally, efflux pump that might be required for efficient secretion of equisetin or other secondary metabolies produced by the equisetin gene cluster. This Fusarium heterosporum protein is MFS transporter eqxG.